Consider the following 205-residue polypeptide: MEKFITLKDTVVPLDAENVDTDQIIPARFLKATDKEGFGENLFRDWRFDKNGDPIEDFVLNQDKYSGSILLAGNNFGCGSSREHAAWAIKAYGFKAVVSSYFADIFKGNALNNGLLPVQVCPEFLTKLFVAIEKDQNEKISIDLEAQKIKIESSGESESFDIDSYKKTCLINGYDDIDFLTSKLEAIKKFEQKRRGKENVPQETI.

The protein belongs to the LeuD family. LeuD type 1 subfamily. As to quaternary structure, heterodimer of LeuC and LeuD.

It catalyses the reaction (2R,3S)-3-isopropylmalate = (2S)-2-isopropylmalate. It participates in amino-acid biosynthesis; L-leucine biosynthesis; L-leucine from 3-methyl-2-oxobutanoate: step 2/4. In terms of biological role, catalyzes the isomerization between 2-isopropylmalate and 3-isopropylmalate, via the formation of 2-isopropylmaleate. This is 3-isopropylmalate dehydratase small subunit from Christiangramia forsetii (strain DSM 17595 / CGMCC 1.15422 / KT0803) (Gramella forsetii).